The sequence spans 418 residues: ATP phosphoribosyltransferase regulatory subunit (418 aa).

Belongs to the class-II aminoacyl-tRNA synthetase family. HisZ subfamily. In terms of assembly, heteromultimer composed of HisG and HisZ subunits.

It is found in the cytoplasm. Its pathway is amino-acid biosynthesis; L-histidine biosynthesis; L-histidine from 5-phospho-alpha-D-ribose 1-diphosphate: step 1/9. Required for the first step of histidine biosynthesis. May allow the feedback regulation of ATP phosphoribosyltransferase activity by histidine. The chain is ATP phosphoribosyltransferase regulatory subunit from Acetivibrio thermocellus (strain ATCC 27405 / DSM 1237 / JCM 9322 / NBRC 103400 / NCIMB 10682 / NRRL B-4536 / VPI 7372) (Clostridium thermocellum).